We begin with the raw amino-acid sequence, 457 residues long: Phosphomethylpyrimidine synthase (457 aa).

Substrate contacts are provided by residues asparagine 80, methionine 109, tyrosine 139, histidine 175, 195 to 197 (SRG), 236 to 239 (DSLR), and glutamate 275. Histidine 279 provides a ligand contact to Zn(2+). Position 302 (tyrosine 302) interacts with substrate. Zn(2+) is bound at residue histidine 343. Residues cysteine 423, cysteine 426, and cysteine 431 each coordinate [4Fe-4S] cluster.

The protein belongs to the ThiC family. The cofactor is [4Fe-4S] cluster.

The enzyme catalyses 5-amino-1-(5-phospho-beta-D-ribosyl)imidazole + S-adenosyl-L-methionine = 4-amino-2-methyl-5-(phosphooxymethyl)pyrimidine + CO + 5'-deoxyadenosine + formate + L-methionine + 3 H(+). The protein operates within cofactor biosynthesis; thiamine diphosphate biosynthesis. In terms of biological role, catalyzes the synthesis of the hydroxymethylpyrimidine phosphate (HMP-P) moiety of thiamine from aminoimidazole ribotide (AIR) in a radical S-adenosyl-L-methionine (SAM)-dependent reaction. This chain is Phosphomethylpyrimidine synthase, found in Trichormus variabilis (strain ATCC 29413 / PCC 7937) (Anabaena variabilis).